Reading from the N-terminus, the 68-residue chain is Venom peptide 3 (68 aa).

An N-terminal signal peptide occupies residues 1 to 25; it reads MTKQSIVIVLFAAIAMMACLQRVTA. AXPX repeat units lie at residues 25–28, 33–36, 37–40, 41–44, and 47–50; these read AEPA, AAPI, AEPY, ANPE, and ASPE. A propeptide spanning residues 26 to 51 is cleaved from the precursor; that stretch reads EPAPEPIAAPIAEPYANPEAIASPEA. Leu65 carries the post-translational modification Leucine amide.

As to expression, expressed by the venom gland.

It localises to the secreted. The protein resides in the target cell membrane. Antimicrobial peptide with strong activity against the fungi B.cinerea (MIC=5 uM) and C.albicans (MIC=33 uM), and no activity against the Gram-negative bacterium E.coli (MIC&gt;200 uM) and the Gram-positive bacterium S.aureus (MIC&gt;200 uM). Shows cytolytic activity against insect cell lines. Has no hemolytic activity against human erythrocytes. In vivo, peptide injection in the vicinity of the head and thorax of lepidopteran larvae induces feeding disorder that lasts one or two days before recovering. The sequence is that of Venom peptide 3 from Orancistrocerus drewseni (Solitary wasp).